A 523-amino-acid polypeptide reads, in one-letter code: NADH-ubiquinone oxidoreductase chain 2 (523 aa).

A run of 14 helical transmembrane segments spans residues 3–23, 30–50, 62–82, 110–130, 135–155, 170–190, 212–232, 246–266, 281–301, 306–326, 333–353, 386–406, 419–439, and 490–510; these read LFGV…IPAI, IILL…NNIG, VTTI…LVLL, SVLA…SSLI, LISM…LATI, FLLG…LYSF, IEIS…AAPF, VVTT…ILEF, LLLI…LAQY, LLTY…AINN, FLFY…ILVA, GLSL…VGFF, GNFF…AYYL, and LVIA…TPLL.

It belongs to the complex I subunit 2 family.

It is found in the mitochondrion inner membrane. The enzyme catalyses a ubiquinone + NADH + 5 H(+)(in) = a ubiquinol + NAD(+) + 4 H(+)(out). Functionally, core subunit of the mitochondrial membrane respiratory chain NADH dehydrogenase (Complex I) that is believed to belong to the minimal assembly required for catalysis. Complex I functions in the transfer of electrons from NADH to the respiratory chain. The immediate electron acceptor for the enzyme is believed to be ubiquinone. The chain is NADH-ubiquinone oxidoreductase chain 2 from Rhizopus oryzae (Mucormycosis agent).